The following is a 923-amino-acid chain: Isoleucine--tRNA ligase (923 aa).

Positions 57-67 (PYANGHIHIGH) match the 'HIGH' region motif. E560 contacts L-isoleucyl-5'-AMP. The 'KMSKS' region signature appears at 601-605 (KMSKS). Position 604 (K604) interacts with ATP. Residues C895, C898, C915, and C918 each contribute to the Zn(2+) site.

This sequence belongs to the class-I aminoacyl-tRNA synthetase family. IleS type 1 subfamily. In terms of assembly, monomer. Requires Zn(2+) as cofactor.

The protein resides in the cytoplasm. The catalysed reaction is tRNA(Ile) + L-isoleucine + ATP = L-isoleucyl-tRNA(Ile) + AMP + diphosphate. Catalyzes the attachment of isoleucine to tRNA(Ile). As IleRS can inadvertently accommodate and process structurally similar amino acids such as valine, to avoid such errors it has two additional distinct tRNA(Ile)-dependent editing activities. One activity is designated as 'pretransfer' editing and involves the hydrolysis of activated Val-AMP. The other activity is designated 'posttransfer' editing and involves deacylation of mischarged Val-tRNA(Ile). The protein is Isoleucine--tRNA ligase of Geobacter sulfurreducens (strain ATCC 51573 / DSM 12127 / PCA).